Reading from the N-terminus, the 278-residue chain is Polyamine aminopropyltransferase (278 aa).

Residues 5-238 (ELWFTEQQTP…GLWSFTLGSK (234 aa)) enclose the PABS domain. Q34 is a binding site for S-methyl-5'-thioadenosine. H65 and D89 together coordinate spermidine. S-methyl-5'-thioadenosine-binding positions include E109 and 140-141 (DG). The active-site Proton acceptor is D158. Spermidine is bound at residue 158 to 161 (DSTD). P165 contributes to the S-methyl-5'-thioadenosine binding site.

The protein belongs to the spermidine/spermine synthase family. As to quaternary structure, homodimer or homotetramer.

Its subcellular location is the cytoplasm. It carries out the reaction S-adenosyl 3-(methylsulfanyl)propylamine + putrescine = S-methyl-5'-thioadenosine + spermidine + H(+). Its pathway is amine and polyamine biosynthesis; spermidine biosynthesis; spermidine from putrescine: step 1/1. Functionally, catalyzes the irreversible transfer of a propylamine group from the amino donor S-adenosylmethioninamine (decarboxy-AdoMet) to putrescine (1,4-diaminobutane) to yield spermidine. The polypeptide is Polyamine aminopropyltransferase (Caldicellulosiruptor bescii (strain ATCC BAA-1888 / DSM 6725 / KCTC 15123 / Z-1320) (Anaerocellum thermophilum)).